The chain runs to 405 residues: Argininosuccinate synthase (405 aa).

11-19 (AYSGGLDTS) contacts ATP. Position 90 (tyrosine 90) interacts with L-citrulline. Glycine 119 serves as a coordination point for ATP. L-aspartate is bound by residues threonine 121, asparagine 125, and aspartate 126. Position 125 (asparagine 125) interacts with L-citrulline. Positions 129, 178, 187, 263, and 275 each coordinate L-citrulline.

Belongs to the argininosuccinate synthase family. Type 1 subfamily. In terms of assembly, homotetramer.

It is found in the cytoplasm. The enzyme catalyses L-citrulline + L-aspartate + ATP = 2-(N(omega)-L-arginino)succinate + AMP + diphosphate + H(+). It functions in the pathway amino-acid biosynthesis; L-arginine biosynthesis; L-arginine from L-ornithine and carbamoyl phosphate: step 2/3. The chain is Argininosuccinate synthase from Legionella pneumophila (strain Paris).